The chain runs to 423 residues: Gamma-glutamyl phosphate reductase (423 aa).

The protein belongs to the gamma-glutamyl phosphate reductase family.

It is found in the cytoplasm. It carries out the reaction L-glutamate 5-semialdehyde + phosphate + NADP(+) = L-glutamyl 5-phosphate + NADPH + H(+). The protein operates within amino-acid biosynthesis; L-proline biosynthesis; L-glutamate 5-semialdehyde from L-glutamate: step 2/2. Functionally, catalyzes the NADPH-dependent reduction of L-glutamate 5-phosphate into L-glutamate 5-semialdehyde and phosphate. The product spontaneously undergoes cyclization to form 1-pyrroline-5-carboxylate. The protein is Gamma-glutamyl phosphate reductase of Paracoccus denitrificans (strain Pd 1222).